A 183-amino-acid polypeptide reads, in one-letter code: Large ribosomal subunit protein bL17 (183 aa).

The segment covering 130–150 has biased composition (basic and acidic residues); the sequence is GTKFAKDEKAKAEATEAKAEE. The disordered stretch occupies residues 130 to 183; that stretch reads GTKFAKDEKAKAEATEAKAEETTETTESTEAESTEAPAEEAKAEDTAAEKKDES. Acidic residues predominate over residues 151 to 162; that stretch reads TTETTESTEAES. The span at 168-183 shows a compositional bias: basic and acidic residues; sequence EEAKAEDTAAEKKDES.

It belongs to the bacterial ribosomal protein bL17 family. In terms of assembly, part of the 50S ribosomal subunit. Contacts protein L32.

This is Large ribosomal subunit protein bL17 from Saccharopolyspora erythraea (strain ATCC 11635 / DSM 40517 / JCM 4748 / NBRC 13426 / NCIMB 8594 / NRRL 2338).